Reading from the N-terminus, the 31-residue chain is Cyclotide glopa C (31 aa).

Residues 1–31 constitute a cross-link (cyclopeptide (Gly-Asn)); the sequence is GDLPICGETCFEGGNCRIPGCTCVWPFCSKN. Cystine bridges form between Cys6–Cys21, Cys10–Cys23, and Cys16–Cys28.

In terms of processing, this is a cyclic peptide.

In terms of biological role, probably participates in a plant defense mechanism. The protein is Cyclotide glopa C of Gloeospermum pauciflorum.